The primary structure comprises 219 residues: MKVLILLVSLISVCFSQIAPKPIIVGGVYRGGETCNSLQPPYTCSSDDLAGGIMMRQGACTYFRGLSNLPTTYNSSSDGSSVIQYTYSADDYFCQESPIQTQTISNGDCEAGCSNDKISYLYNLSSDSNDQVPKNAVLTIKSQSSNCATDWETTWESIEYLNTDTCIVDEVTGGSFKVSCTQGGMTIYSYAAPGCTNNPKVYGVGFYTDSCDGYQVCSL.

An N-terminal signal peptide occupies residues 1 to 16 (MKVLILLVSLISVCFS). N-linked (GlcNAc...) asparagine glycosylation is found at N74 and N123.

It is found in the secreted. In Dictyostelium discoideum (Social amoeba), this protein is Counting factor-associated protein C (cfaC).